The sequence spans 139 residues: Large ribosomal subunit protein uL22 (139 aa).

The tract at residues 1-21 is disordered; sequence MTAPEQTYRNKKQRKQQHKLR. The segment covering 9-21 has biased composition (basic residues); it reads RNKKQRKQQHKLR.

The protein belongs to the universal ribosomal protein uL22 family. Part of the 50S ribosomal subunit.

This protein binds specifically to 23S rRNA; its binding is stimulated by other ribosomal proteins, e.g. L4, L17, and L20. It is important during the early stages of 50S assembly. It makes multiple contacts with different domains of the 23S rRNA in the assembled 50S subunit and ribosome. Functionally, the globular domain of the protein is located near the polypeptide exit tunnel on the outside of the subunit, while an extended beta-hairpin is found that lines the wall of the exit tunnel in the center of the 70S ribosome. The sequence is that of Large ribosomal subunit protein uL22 from Deinococcus geothermalis (strain DSM 11300 / CIP 105573 / AG-3a).